The primary structure comprises 303 residues: Beta-carotene 3-hydroxylase 2, chloroplastic (303 aa).

A chloroplast-targeting transit peptide spans 1 to 52; sequence MAAGLSTIAVTLKPLNRSSFSANHPISTAVFPPSLRFNGFRRRKILTVCFVV. 2 consecutive transmembrane segments (helical) span residues 96–116 and 130–150; these read YLIAAVMSSFGITSMAIMAVY and VLEMFGTFALSVGAAVGMEFW. The 128-residue stretch at 143-270 folds into the Fatty acid hydroxylase domain; sequence AAVGMEFWAR…KFKGVPYGLF (128 aa). The short motif at 155–160 is the Histidine box-1 element; sequence HRALWH. Residues 165–171 carry the Histidine box-2 motif; it reads NMHESHH. The next 2 helical transmembrane spans lie at 180–200 and 206–226; these read LNDVFAITNAVPAIGLLYYGF and VPGLCFGAGLGITMFGMAYMF. The Histidine box-3 motif lies at 228 to 233; the sequence is HDGLVH. Positions 254-258 match the Histidine box-4 motif; it reads HQLHH.

It belongs to the sterol desaturase family. As to quaternary structure, homodimer. Expressed in leaves, flowers, stems, roots and siliques.

Its subcellular location is the plastid. It is found in the chloroplast membrane. The catalysed reaction is all-trans-beta-carotene + 4 reduced [2Fe-2S]-[ferredoxin] + 2 O2 + 4 H(+) = all-trans-zeaxanthin + 4 oxidized [2Fe-2S]-[ferredoxin] + 2 H2O. Its function is as follows. Nonheme diiron monooxygenase involved in the biosynthesis of xanthophylls. Specific for beta-ring hydroxylations of beta-carotene. Also has a low activity toward the beta- and epsilon-rings of alpha-carotene. No activity with acyclic carotenoids such as lycopene and neurosporene. Uses ferredoxin as an electron donor. In Arabidopsis thaliana (Mouse-ear cress), this protein is Beta-carotene 3-hydroxylase 2, chloroplastic (BETA-OHASE 2).